Here is a 431-residue protein sequence, read N- to C-terminus: Glutamyl-tRNA(Gln) amidotransferase subunit A (431 aa).

Residues K55 and S130 each act as charge relay system in the active site. S154 serves as the catalytic Acyl-ester intermediate.

This sequence belongs to the amidase family. GatA subfamily. In terms of assembly, heterotrimer of A, B and C subunits.

The enzyme catalyses L-glutamyl-tRNA(Gln) + L-glutamine + ATP + H2O = L-glutaminyl-tRNA(Gln) + L-glutamate + ADP + phosphate + H(+). Allows the formation of correctly charged Gln-tRNA(Gln) through the transamidation of misacylated Glu-tRNA(Gln) in organisms which lack glutaminyl-tRNA synthetase. The reaction takes place in the presence of glutamine and ATP through an activated gamma-phospho-Glu-tRNA(Gln). This chain is Glutamyl-tRNA(Gln) amidotransferase subunit A, found in Methanococcus vannielii (strain ATCC 35089 / DSM 1224 / JCM 13029 / OCM 148 / SB).